The sequence spans 154 residues: Ribonuclease 8 (154 aa).

The first 27 residues, 1-27 (MAPARAGCCPLLLLLLGLWVAEVLVRA), serve as a signal peptide directing secretion. The Proton acceptor role is filled by His-42. Cystine bridges form between Cys-50–Cys-93, Cys-64–Cys-118, Cys-82–Cys-133, and Cys-89–Cys-96. Residues 65 to 69 (KDLNT) and Lys-90 contribute to the substrate site. His-149 functions as the Proton donor in the catalytic mechanism.

The protein belongs to the pancreatic ribonuclease family. As to expression, expressed prominently in the placenta and is not detected in any other tissues examined.

It localises to the secreted. Its function is as follows. Has a low ribonuclease activity. In Homo sapiens (Human), this protein is Ribonuclease 8 (RNASE8).